We begin with the raw amino-acid sequence, 83 residues long: Cytotoxin homolog 5 (83 aa).

Positions 1–21 (MKTLLLTMVVVTIVCLDLGYT) are cleaved as a signal peptide. Intrachain disulfides connect C24-C43, C36-C61, C65-C76, and C77-C82.

This sequence belongs to the three-finger toxin family. Short-chain subfamily. Orphan group XV sub-subfamily. In terms of tissue distribution, expressed by the venom gland.

The protein localises to the secreted. The protein resides in the target cell membrane. In terms of biological role, has low cytotoxic activity. The polypeptide is Cytotoxin homolog 5 (Naja atra (Chinese cobra)).